A 476-amino-acid chain; its full sequence is mRNA cap guanine-N(7) methyltransferase (476 aa).

Basic and acidic residues predominate over residues Met-1–Ser-14. Residues Met-1–Ser-146 are disordered. A compositionally biased stretch (polar residues) spans Ala-20–Cys-50. Residues Ser-24, Ser-28, and Ser-29 each carry the phosphoserine modification. Basic and acidic residues-rich tracts occupy residues Asp-54–Lys-68 and Leu-84–Ser-118. At Ser-118 the chain carries Phosphoserine. The short motif at Lys-126–Lys-128 is the Nuclear localization signal element. A compositionally biased stretch (basic and acidic residues) spans Ile-129–His-145. The 309-residue stretch at Ser-167–Gln-475 folds into the mRNA cap 0 methyltransferase domain. Asn-176–Asn-177 is an mRNA binding site. The S-adenosyl-L-methionine site is built by Lys-180, Gly-205, Asp-227, Asp-261, Gln-284, and Tyr-289.

Belongs to the class I-like SAM-binding methyltransferase superfamily. mRNA cap 0 methyltransferase family. In terms of assembly, interacts with importin alpha, leading to stimulate both RNA-binding and methyltransferase activity. Interaction with importin alpha and beta is required for its nuclear localization, importin beta dissociating in response to RanGTP, allowing RNMT-importin alpha to bind RNA substrates. Interacts with elongating form of polymerase II and RNGTT. Interacts with RAMAC, this interaction significantly enhances RNA-binding and cap methyltransferase activity. In terms of tissue distribution, widely expressed.

The protein resides in the nucleus. The catalysed reaction is a 5'-end (5'-triphosphoguanosine)-ribonucleoside in mRNA + S-adenosyl-L-methionine = a 5'-end (N(7)-methyl 5'-triphosphoguanosine)-ribonucleoside in mRNA + S-adenosyl-L-homocysteine. Its activity is regulated as follows. Methyltransferase activity is activated by RAMAC. In terms of biological role, catalytic subunit of the mRNA-capping methyltransferase RNMT:RAMAC complex that methylates the N7 position of the added guanosine to the 5'-cap structure of mRNAs. Binds RNA containing 5'-terminal GpppC. The polypeptide is mRNA cap guanine-N(7) methyltransferase (RNMT) (Homo sapiens (Human)).